Reading from the N-terminus, the 199-residue chain is Pathogenesis-related 5 protein Cup a 3 (199 aa).

Disulfide bonds link cysteine 9-cysteine 198, cysteine 50-cysteine 60, cysteine 65-cysteine 71, cysteine 113-cysteine 187, cysteine 118-cysteine 171, cysteine 126-cysteine 136, cysteine 140-cysteine 149, and cysteine 150-cysteine 158.

This sequence belongs to the thaumatin family. In terms of tissue distribution, expressed in pollen.

The protein localises to the secreted. It localises to the extracellular space. The protein resides in the extracellular matrix. Its subcellular location is the pollen coat. It is found in the cytoplasm. The protein localises to the nucleus. It localises to the mitochondrion. The protein resides in the endoplasmic reticulum. Its subcellular location is the golgi apparatus. It is found in the golgi stack. The protein localises to the vesicle. It localises to the vacuole. The chain is Pathogenesis-related 5 protein Cup a 3 from Hesperocyparis arizonica (Arizona cypress).